The chain runs to 353 residues: Uroporphyrinogen decarboxylase (353 aa).

Residues 26–30 (RQAGR), Asp75, Tyr161, Ser216, and His332 each bind substrate.

This sequence belongs to the uroporphyrinogen decarboxylase family. As to quaternary structure, homodimer.

Its subcellular location is the cytoplasm. The catalysed reaction is uroporphyrinogen III + 4 H(+) = coproporphyrinogen III + 4 CO2. It participates in porphyrin-containing compound metabolism; protoporphyrin-IX biosynthesis; coproporphyrinogen-III from 5-aminolevulinate: step 4/4. Catalyzes the decarboxylation of four acetate groups of uroporphyrinogen-III to yield coproporphyrinogen-III. The polypeptide is Uroporphyrinogen decarboxylase (Gluconacetobacter diazotrophicus (strain ATCC 49037 / DSM 5601 / CCUG 37298 / CIP 103539 / LMG 7603 / PAl5)).